Here is a 213-residue protein sequence, read N- to C-terminus: Imidazole glycerol phosphate synthase subunit HisH 1 (213 aa).

The region spanning 4–213 (TVAVIDYGMG…QNFVAWDGRW (210 aa)) is the Glutamine amidotransferase type-1 domain. The Nucleophile role is filled by cysteine 82. Residues histidine 191 and glutamate 193 contribute to the active site.

In terms of assembly, heterodimer of HisH and HisF.

The protein resides in the cytoplasm. It carries out the reaction 5-[(5-phospho-1-deoxy-D-ribulos-1-ylimino)methylamino]-1-(5-phospho-beta-D-ribosyl)imidazole-4-carboxamide + L-glutamine = D-erythro-1-(imidazol-4-yl)glycerol 3-phosphate + 5-amino-1-(5-phospho-beta-D-ribosyl)imidazole-4-carboxamide + L-glutamate + H(+). The catalysed reaction is L-glutamine + H2O = L-glutamate + NH4(+). The protein operates within amino-acid biosynthesis; L-histidine biosynthesis; L-histidine from 5-phospho-alpha-D-ribose 1-diphosphate: step 5/9. Functionally, IGPS catalyzes the conversion of PRFAR and glutamine to IGP, AICAR and glutamate. The HisH subunit provides the glutamine amidotransferase activity that produces the ammonia necessary to HisF for the synthesis of IGP and AICAR. In Pseudomonas aeruginosa (strain ATCC 15692 / DSM 22644 / CIP 104116 / JCM 14847 / LMG 12228 / 1C / PRS 101 / PAO1), this protein is Imidazole glycerol phosphate synthase subunit HisH 1 (hisH1).